Here is a 165-residue protein sequence, read N- to C-terminus: Adenosine 5'-monophosphoramidase HINT3 (165 aa).

The interval 1–23 (MAEKQAGLVGEPDPEGSSPGTSE) is disordered. Ala-2 bears the N-acetylalanine mark. The HIT domain maps to 32 to 143 (VFCRVAAGQE…PVKEFGFLSK (112 aa)). Residues 59-60 (DI) and 128-130 (HLH) contribute to the AMP site. Residues 126 to 130 (HLHLH) carry the Histidine triad motif motif. The active-site Tele-AMP-histidine intermediate is the His-128.

Belongs to the HINT family. As to quaternary structure, forms dimers to octamers and even larger oligomer. Interacts with CALM1.

Its subcellular location is the cytoplasm. The protein localises to the nucleus. The catalysed reaction is adenosine 5'-phosphoramidate + H2O = AMP + NH4(+). In terms of biological role, exhibits adenosine 5'-monophosphoramidase activity, hydrolyzing purine nucleotide phosphoramidates with a single phosphate group such as adenosine 5'monophosphoramidate (AMP-NH2) to yield AMP and NH2. Hydrolyzes lysyl-AMP (AMP-N-epsilon-(N-alpha-acetyl lysine methyl ester)) generated by lysine tRNA ligase. The sequence is that of Adenosine 5'-monophosphoramidase HINT3 (Hint3) from Mus musculus (Mouse).